A 134-amino-acid polypeptide reads, in one-letter code: Phosphoribosyl-AMP cyclohydrolase (134 aa).

D80 is a binding site for Mg(2+). C81 is a Zn(2+) binding site. 2 residues coordinate Mg(2+): D82 and D84. Zn(2+) contacts are provided by C98 and C105.

This sequence belongs to the PRA-CH family. In terms of assembly, homodimer. Mg(2+) is required as a cofactor. The cofactor is Zn(2+).

Its subcellular location is the cytoplasm. The catalysed reaction is 1-(5-phospho-beta-D-ribosyl)-5'-AMP + H2O = 1-(5-phospho-beta-D-ribosyl)-5-[(5-phospho-beta-D-ribosylamino)methylideneamino]imidazole-4-carboxamide. It participates in amino-acid biosynthesis; L-histidine biosynthesis; L-histidine from 5-phospho-alpha-D-ribose 1-diphosphate: step 3/9. Functionally, catalyzes the hydrolysis of the adenine ring of phosphoribosyl-AMP. The polypeptide is Phosphoribosyl-AMP cyclohydrolase (Bordetella avium (strain 197N)).